A 319-amino-acid polypeptide reads, in one-letter code: uncharacterized protein (319 aa).

Residues 268-312 show a composition bias toward low complexity; it reads SSVVAVTHPPSTTSTTTSVSETLSSFIAPSDLSSQPSPSSHPSSP. The segment at 268-319 is disordered; that stretch reads SSVVAVTHPPSTTSTTTSVSETLSSFIAPSDLSSQPSPSSHPSSPFGNHNEF.

This is an uncharacterized protein from Lepidoptera (butterflies and moths).